Consider the following 234-residue polypeptide: Glucosamine-6-phosphate deaminase (234 aa).

Asp-63 functions as the Proton acceptor; for enolization step in the catalytic mechanism. The active-site For ring-opening step is Asn-129. His-131 (proton acceptor; for ring-opening step) is an active-site residue. Glu-136 serves as the catalytic For ring-opening step.

The protein belongs to the glucosamine/galactosamine-6-phosphate isomerase family. NagB subfamily.

It catalyses the reaction alpha-D-glucosamine 6-phosphate + H2O = beta-D-fructose 6-phosphate + NH4(+). Its pathway is amino-sugar metabolism; N-acetylneuraminate degradation; D-fructose 6-phosphate from N-acetylneuraminate: step 5/5. Its function is as follows. Catalyzes the reversible isomerization-deamination of glucosamine 6-phosphate (GlcN6P) to form fructose 6-phosphate (Fru6P) and ammonium ion. This Listeria monocytogenes serotype 4b (strain CLIP80459) protein is Glucosamine-6-phosphate deaminase.